Reading from the N-terminus, the 431-residue chain is Enolase (431 aa).

Gln-167 is a (2R)-2-phosphoglycerate binding site. Glu-209 functions as the Proton donor in the catalytic mechanism. Residues Asp-246, Glu-289, and Asp-316 each contribute to the Mg(2+) site. (2R)-2-phosphoglycerate is bound by residues Lys-341, Arg-370, Ser-371, and Lys-392. The active-site Proton acceptor is Lys-341.

Belongs to the enolase family. Component of the RNA degradosome, a multiprotein complex involved in RNA processing and mRNA degradation. The cofactor is Mg(2+).

It is found in the cytoplasm. The protein resides in the secreted. It localises to the cell surface. It carries out the reaction (2R)-2-phosphoglycerate = phosphoenolpyruvate + H2O. It participates in carbohydrate degradation; glycolysis; pyruvate from D-glyceraldehyde 3-phosphate: step 4/5. Its function is as follows. Catalyzes the reversible conversion of 2-phosphoglycerate (2-PG) into phosphoenolpyruvate (PEP). It is essential for the degradation of carbohydrates via glycolysis. This chain is Enolase, found in Shewanella halifaxensis (strain HAW-EB4).